The chain runs to 134 residues: D-ribose pyranase (134 aa).

Catalysis depends on histidine 20, which acts as the Proton donor. Substrate-binding positions include aspartate 28, histidine 101, and 123-125; that span reads YCN.

It belongs to the RbsD / FucU family. RbsD subfamily. As to quaternary structure, homodecamer.

Its subcellular location is the cytoplasm. It catalyses the reaction beta-D-ribopyranose = beta-D-ribofuranose. Its pathway is carbohydrate metabolism; D-ribose degradation; D-ribose 5-phosphate from beta-D-ribopyranose: step 1/2. In terms of biological role, catalyzes the interconversion of beta-pyran and beta-furan forms of D-ribose. The polypeptide is D-ribose pyranase (Pseudomonas fluorescens (strain SBW25)).